Consider the following 272-residue polypeptide: CD40 ligand (272 aa).

The Cytoplasmic portion of the chain corresponds to 1-23 (MNEAYSPAAPRPMGSTSPSTMKM). The helical; Signal-anchor for type II membrane protein transmembrane segment at 24–44 (FMCFLSVFMVVQTIGTVLFCL) threads the bilayer. Residues 45–272 (YLHMKMDKME…GNTYFGMFKL (228 aa)) are Extracellular-facing. 2 N-linked (GlcNAc...) asparagine glycosylation sites follow: Asn124 and Asn146. Residues 136–272 (IATHLAGVKS…GNTYFGMFKL (137 aa)) enclose the THD domain. Residues Cys190 and Cys229 are joined by a disulfide bond. The N-linked (GlcNAc...) asparagine glycan is linked to Asn251.

Belongs to the tumor necrosis factor family. In terms of assembly, homotrimer. Interacts with CD28. CD40 ligand, soluble form: Exists as either a monomer or a homotrimer. Forms a ternary complex between CD40 and integrins for CD40-CD40LG signaling. Post-translationally, the soluble form derives from the membrane form by proteolytic processing.

It localises to the cell membrane. Its subcellular location is the cell surface. It is found in the secreted. Cytokine that acts as a ligand to CD40/TNFRSF5. Costimulates T-cell proliferation and cytokine production. Induces the activation of NF-kappa-B. Mediates B-cell proliferation in the absence of co-stimulus as well as IgE production in the presence of IL4. Involved in immunoglobulin class switching. In terms of biological role, acts as a ligand for integrins, specifically ITGA5:ITGB1 and ITGAV:ITGB3; both integrins and the CD40 receptor are required for activation of CD40-CD40LG signaling, which have cell-type dependent effects, such as B-cell activation, NF-kappa-B signaling and anti-apoptotic signaling. In Gallus gallus (Chicken), this protein is CD40 ligand (CD40LG).